The primary structure comprises 521 residues: GMP synthase [glutamine-hydrolyzing] (521 aa).

The Glutamine amidotransferase type-1 domain maps to lysine 5–glycine 197. Catalysis depends on cysteine 81, which acts as the Nucleophile. Catalysis depends on residues histidine 171 and glutamate 173. Residues tryptophan 198 to arginine 390 enclose the GMPS ATP-PPase domain. Serine 225–serine 231 contacts ATP.

In terms of assembly, homodimer.

It catalyses the reaction XMP + L-glutamine + ATP + H2O = GMP + L-glutamate + AMP + diphosphate + 2 H(+). It participates in purine metabolism; GMP biosynthesis; GMP from XMP (L-Gln route): step 1/1. Catalyzes the synthesis of GMP from XMP. This chain is GMP synthase [glutamine-hydrolyzing], found in Neisseria meningitidis serogroup C (strain 053442).